Here is a 1005-residue protein sequence, read N- to C-terminus: Small G protein signaling modulator 2 (1005 aa).

The 158-residue stretch at 34-191 (HEDSSHIIAL…EYTKLKTADH (158 aa)) folds into the RUN domain. Disordered stretches follow at residues 95-121 (QAEGRKPSGGSQEALRKQGSTGGKAPA) and 205-236 (HRIRGPPNRQDSPAKRPALGIRKRHSSGSASE). 2 positions are modified to phosphoserine: serine 402 and leucine 444. The Rab-GAP TBC domain occupies 566–938 (GVEHEIRKDV…AVWEVIWAAR (373 aa)). 2 disordered regions span residues 657 to 687 (FISVDDLEPSGPQDLEDSKPKREQEPGAGTP) and 729 to 761 (GFEDDGAGEDGSEGPATAAHTFPGPHDPGQETL). Over residues 672 to 681 (EDSKPKREQE) the composition is skewed to basic and acidic residues. Over residues 730–740 (FEDDGAGEDGS) the composition is skewed to acidic residues.

The protein belongs to the RUTBC family. In terms of assembly, interacts with RAB4A, RAB11A, RAP1A, RAP1B, RAP2A and RAP2B. No interaction with RAB27A. Interacts with RAB9A. In terms of tissue distribution, widely expressed.

It is found in the cytoplasm. The protein resides in the melanosome. Its function is as follows. Possesses GTPase activator activity towards RAB32, RAB33B and RAB38. Regulates the trafficking of melanogenic enzymes TYR, TYRP1 and DCT/TYRP2 to melanosomes in melanocytes by inactivating RAB32 and RAB38. Inhibits RAB32 and RAB38 activation both directly by promoting their GTPase activity and indirectly by disrupting the RAB9A-HPS4 interaction which is required for RAB32/38 activation. This Mus musculus (Mouse) protein is Small G protein signaling modulator 2 (Sgsm2).